We begin with the raw amino-acid sequence, 76 residues long: Omega-conotoxin-like TxO5 (76 aa).

The first 22 residues, 1 to 22 (MKLTCMMIVAVLFLTAWTFVTA), serve as a signal peptide directing secretion. Positions 23–48 (ITSNGLENLFPKAHHEMKNPEASKLN) are excised as a propeptide. Intrachain disulfides connect cysteine 51–cysteine 66, cysteine 58–cysteine 70, and cysteine 65–cysteine 75.

It belongs to the conotoxin O1 superfamily. In terms of tissue distribution, expressed by the venom duct.

The protein localises to the secreted. In terms of biological role, omega-conotoxins act at presynaptic membranes, they bind and block voltage-gated calcium channels (Cav). The polypeptide is Omega-conotoxin-like TxO5 (Conus textile (Cloth-of-gold cone)).